We begin with the raw amino-acid sequence, 72 residues long: Large ribosomal subunit protein uL29 (72 aa).

Belongs to the universal ribosomal protein uL29 family.

This Thermodesulfovibrio yellowstonii (strain ATCC 51303 / DSM 11347 / YP87) protein is Large ribosomal subunit protein uL29.